A 437-amino-acid polypeptide reads, in one-letter code: tRNA-2-methylthio-N(6)-dimethylallyladenosine synthase (437 aa).

Residues 1 to 115 enclose the MTTase N-terminal domain; that stretch reads MKVYIETMGC…ISQVIHKEKA (115 aa). [4Fe-4S] cluster is bound by residues cysteine 10, cysteine 46, cysteine 78, cysteine 148, cysteine 152, and cysteine 155. Positions 134–367 constitute a Radical SAM core domain; sequence KKAQIRSLLN…QNRHKEILEE (234 aa). The TRAM domain maps to 370–436; sequence KLEVGKTHVV…KGRLMATTKG (67 aa).

This sequence belongs to the methylthiotransferase family. MiaB subfamily. In terms of assembly, monomer. Requires [4Fe-4S] cluster as cofactor.

It localises to the cytoplasm. The catalysed reaction is N(6)-dimethylallyladenosine(37) in tRNA + (sulfur carrier)-SH + AH2 + 2 S-adenosyl-L-methionine = 2-methylsulfanyl-N(6)-dimethylallyladenosine(37) in tRNA + (sulfur carrier)-H + 5'-deoxyadenosine + L-methionine + A + S-adenosyl-L-homocysteine + 2 H(+). In terms of biological role, catalyzes the methylthiolation of N6-(dimethylallyl)adenosine (i(6)A), leading to the formation of 2-methylthio-N6-(dimethylallyl)adenosine (ms(2)i(6)A) at position 37 in tRNAs that read codons beginning with uridine. This Helicobacter pylori (strain J99 / ATCC 700824) (Campylobacter pylori J99) protein is tRNA-2-methylthio-N(6)-dimethylallyladenosine synthase.